Reading from the N-terminus, the 330-residue chain is N-acetyl-gamma-glutamyl-phosphate reductase (330 aa).

Residue cysteine 155 is part of the active site.

This sequence belongs to the NAGSA dehydrogenase family. Type 1 subfamily.

The protein localises to the cytoplasm. The enzyme catalyses N-acetyl-L-glutamate 5-semialdehyde + phosphate + NADP(+) = N-acetyl-L-glutamyl 5-phosphate + NADPH + H(+). It participates in amino-acid biosynthesis; L-arginine biosynthesis; N(2)-acetyl-L-ornithine from L-glutamate: step 3/4. Its function is as follows. Catalyzes the NADPH-dependent reduction of N-acetyl-5-glutamyl phosphate to yield N-acetyl-L-glutamate 5-semialdehyde. The sequence is that of N-acetyl-gamma-glutamyl-phosphate reductase from Shewanella halifaxensis (strain HAW-EB4).